We begin with the raw amino-acid sequence, 632 residues long: DNA gyrase subunit B (632 aa).

Residues 419–533 (RELFIVEGES…SGYLYIAQPP (115 aa)) enclose the Toprim domain. The Mg(2+) site is built by Glu425, Asp498, and Asp500.

The protein belongs to the type II topoisomerase GyrB family. Heterotetramer, composed of two GyrA and two GyrB chains. In the heterotetramer, GyrA contains the active site tyrosine that forms a transient covalent intermediate with DNA, while GyrB binds cofactors and catalyzes ATP hydrolysis. Requires Mg(2+) as cofactor. Mn(2+) serves as cofactor. It depends on Ca(2+) as a cofactor.

It is found in the cytoplasm. It catalyses the reaction ATP-dependent breakage, passage and rejoining of double-stranded DNA.. A type II topoisomerase that negatively supercoils closed circular double-stranded (ds) DNA in an ATP-dependent manner to modulate DNA topology and maintain chromosomes in an underwound state. Negative supercoiling favors strand separation, and DNA replication, transcription, recombination and repair, all of which involve strand separation. Also able to catalyze the interconversion of other topological isomers of dsDNA rings, including catenanes and knotted rings. Type II topoisomerases break and join 2 DNA strands simultaneously in an ATP-dependent manner. This Archaeoglobus fulgidus (strain ATCC 49558 / DSM 4304 / JCM 9628 / NBRC 100126 / VC-16) protein is DNA gyrase subunit B.